A 428-amino-acid polypeptide reads, in one-letter code: Serine--tRNA ligase (428 aa).

Residue 235-237 (TAE) participates in L-serine binding. 266-268 (RSE) serves as a coordination point for ATP. Residue Glu289 participates in L-serine binding. An ATP-binding site is contributed by 353 to 356 (EISS). Ser389 contacts L-serine.

The protein belongs to the class-II aminoacyl-tRNA synthetase family. Type-1 seryl-tRNA synthetase subfamily. In terms of assembly, homodimer. The tRNA molecule binds across the dimer.

Its subcellular location is the cytoplasm. It catalyses the reaction tRNA(Ser) + L-serine + ATP = L-seryl-tRNA(Ser) + AMP + diphosphate + H(+). It carries out the reaction tRNA(Sec) + L-serine + ATP = L-seryl-tRNA(Sec) + AMP + diphosphate + H(+). Its pathway is aminoacyl-tRNA biosynthesis; selenocysteinyl-tRNA(Sec) biosynthesis; L-seryl-tRNA(Sec) from L-serine and tRNA(Sec): step 1/1. Functionally, catalyzes the attachment of serine to tRNA(Ser). Is also able to aminoacylate tRNA(Sec) with serine, to form the misacylated tRNA L-seryl-tRNA(Sec), which will be further converted into selenocysteinyl-tRNA(Sec). The sequence is that of Serine--tRNA ligase from Shewanella baltica (strain OS155 / ATCC BAA-1091).